Consider the following 736-residue polypeptide: Polyphosphate kinase (736 aa).

N91 serves as a coordination point for ATP. Mg(2+) is bound by residues R421 and R451. The active-site Phosphohistidine intermediate is the H481. 3 residues coordinate ATP: Y514, R610, and H638.

It belongs to the polyphosphate kinase 1 (PPK1) family. Requires Mg(2+) as cofactor. In terms of processing, an intermediate of this reaction is the autophosphorylated ppk in which a phosphate is covalently linked to a histidine residue through a N-P bond.

It catalyses the reaction [phosphate](n) + ATP = [phosphate](n+1) + ADP. Catalyzes the reversible transfer of the terminal phosphate of ATP to form a long-chain polyphosphate (polyP). This Pseudomonas syringae pv. tomato (strain ATCC BAA-871 / DC3000) protein is Polyphosphate kinase.